The chain runs to 199 residues: Glycerol-3-phosphate acyltransferase (199 aa).

The next 4 membrane-spanning stretches (helical) occupy residues 2–22 (LEVL…GILV), 77–97 (PWVL…PVFL), 113–133 (IALA…VALA), and 139–159 (LAAM…GQPL).

This sequence belongs to the PlsY family. As to quaternary structure, probably interacts with PlsX.

Its subcellular location is the cell membrane. The enzyme catalyses an acyl phosphate + sn-glycerol 3-phosphate = a 1-acyl-sn-glycero-3-phosphate + phosphate. It functions in the pathway lipid metabolism; phospholipid metabolism. Its function is as follows. Catalyzes the transfer of an acyl group from acyl-phosphate (acyl-PO(4)) to glycerol-3-phosphate (G3P) to form lysophosphatidic acid (LPA). This enzyme utilizes acyl-phosphate as fatty acyl donor, but not acyl-CoA or acyl-ACP. This Rubrobacter xylanophilus (strain DSM 9941 / JCM 11954 / NBRC 16129 / PRD-1) protein is Glycerol-3-phosphate acyltransferase.